The following is a 354-amino-acid chain: Protein REDOX 1 (354 aa).

Residue Cys-44 participates in Zn(2+) binding. 45–49 (HSDLH) contacts NAD(+). Zn(2+)-binding residues include His-66, Cys-97, Cys-100, Cys-103, and Cys-111. Residues 185 to 190 (GLGGLG), Lys-214, 271 to 273 (VGA), 295 to 297 (SAV), and Arg-340 contribute to the NAD(+) site.

This sequence belongs to the zinc-containing alcohol dehydrogenase family. Zn(2+) serves as cofactor. In terms of tissue distribution, expressed in leaf epidermis.

It carries out the reaction 3,17-didehydrostemmadenine + NADPH + H2O = (16S)-deshydroxymethyl-stemmadenine + formate + NADP(+). It catalyses the reaction 3,17-didehydrostemmadenine + NADPH + H2O = (16R)-deshydroxymethyl-stemmadenine + formate + NADP(+). The catalysed reaction is 17-dehydrostemmadenine + NADP(+) = 3,17-didehydrostemmadenine + NADPH. It participates in alkaloid biosynthesis. In terms of biological role, component of iboga and aspidosperma monoterpenoid indole alkaloids (MIAs, e.g. tabersonine and catharanthine) biosynthesis pathway from 19E-geissoschizine. Catalyzes the first oxidation step of the unstable intermediate product resulting from the reaction triggered by the geissoschizine oxidase (GO) in the stemmadenine biosynthesis process from 19E-geissoschizine. The sequence is that of Protein REDOX 1 from Catharanthus roseus (Madagascar periwinkle).